Consider the following 340-residue polypeptide: tRNA N6-adenosine threonylcarbamoyltransferase (340 aa).

Residues H111 and H115 each contribute to the Fe cation site. Residues 133 to 137, D166, G179, D183, and N274 each bind substrate; that span reads VVSGG. D299 provides a ligand contact to Fe cation.

This sequence belongs to the KAE1 / TsaD family. The cofactor is Fe(2+).

It is found in the cytoplasm. The catalysed reaction is L-threonylcarbamoyladenylate + adenosine(37) in tRNA = N(6)-L-threonylcarbamoyladenosine(37) in tRNA + AMP + H(+). Functionally, required for the formation of a threonylcarbamoyl group on adenosine at position 37 (t(6)A37) in tRNAs that read codons beginning with adenine. Is involved in the transfer of the threonylcarbamoyl moiety of threonylcarbamoyl-AMP (TC-AMP) to the N6 group of A37, together with TsaE and TsaB. TsaD likely plays a direct catalytic role in this reaction. The polypeptide is tRNA N6-adenosine threonylcarbamoyltransferase (Brachyspira hyodysenteriae (strain ATCC 49526 / WA1)).